The sequence spans 224 residues: MRSAEEKTVLLCALDDDLEGLKGILERTFTDDAAQSENILWEKDEVGRNALFAACMMGRSAIVRELVQNGAADVNELTARGYSPLHCSAMWGQLDTLKTLVELNADFQAINFRGEKAVDVARRYDKLDCAEYLAWAEAKQNLQAFIQEVRAIVADQEKVQGKLNKEDKNICINTCSAKSDWINNTRTATAQDFIEQKKLLEDVLAPVLLKLNAQPEASMKTRKN.

ANK repeat units follow at residues 46–76 (VGRNALFAACMMGRSAIVRELVQNGAADVNE) and 80–109 (RGYSPLHCSAMWGQLDTLKTLVELNADFQA).

In terms of tissue distribution, widely expressed.

The protein localises to the cytoplasm. It is found in the midbody. Its subcellular location is the midbody ring. It localises to the cleavage furrow. Its function is as follows. May play a role during cell division. The chain is Ankyrin repeat domain-containing protein 45 from Danio rerio (Zebrafish).